Consider the following 338-residue polypeptide: tRNA N6-adenosine threonylcarbamoyltransferase (338 aa).

2 residues coordinate Fe cation: H111 and H115. Residues 134 to 138, D167, G180, and N272 each bind substrate; that span reads LVSGG. A Fe cation-binding site is contributed by D300.

This sequence belongs to the KAE1 / TsaD family. Requires Fe(2+) as cofactor.

Its subcellular location is the cytoplasm. It carries out the reaction L-threonylcarbamoyladenylate + adenosine(37) in tRNA = N(6)-L-threonylcarbamoyladenosine(37) in tRNA + AMP + H(+). Functionally, required for the formation of a threonylcarbamoyl group on adenosine at position 37 (t(6)A37) in tRNAs that read codons beginning with adenine. Is involved in the transfer of the threonylcarbamoyl moiety of threonylcarbamoyl-AMP (TC-AMP) to the N6 group of A37, together with TsaE and TsaB. TsaD likely plays a direct catalytic role in this reaction. This chain is tRNA N6-adenosine threonylcarbamoyltransferase, found in Nitrosomonas eutropha (strain DSM 101675 / C91 / Nm57).